The primary structure comprises 931 residues: Isoleucine--tRNA ligase (931 aa).

The short motif at 58-68 (PYANGHLHCGH) is the 'HIGH' region element. Glu-559 provides a ligand contact to L-isoleucyl-5'-AMP. The 'KMSKS' region signature appears at 600–604 (KLSKS). Lys-603 contributes to the ATP binding site. Zn(2+) is bound by residues Cys-894, Cys-897, Cys-914, and Cys-917.

Belongs to the class-I aminoacyl-tRNA synthetase family. IleS type 1 subfamily. Monomer. The cofactor is Zn(2+).

It localises to the cytoplasm. It carries out the reaction tRNA(Ile) + L-isoleucine + ATP = L-isoleucyl-tRNA(Ile) + AMP + diphosphate. Its function is as follows. Catalyzes the attachment of isoleucine to tRNA(Ile). As IleRS can inadvertently accommodate and process structurally similar amino acids such as valine, to avoid such errors it has two additional distinct tRNA(Ile)-dependent editing activities. One activity is designated as 'pretransfer' editing and involves the hydrolysis of activated Val-AMP. The other activity is designated 'posttransfer' editing and involves deacylation of mischarged Val-tRNA(Ile). The polypeptide is Isoleucine--tRNA ligase (Legionella pneumophila (strain Lens)).